The following is a 644-amino-acid chain: Large subunit GTPase 1 homolog (644 aa).

The tract at residues 1-31 (MGRRRAPGGGSLGRVLIRQQTQRSRSHRHTD) is disordered. Ser93 and Ser97 each carry phosphoserine. The 267-residue stretch at 164 to 430 (WRQLWRVIER…LCDCPGLVMP (267 aa)) folds into the CP-type G domain. GTP is bound at residue 212–215 (NKAD). The tract at residues 253–345 (KEEVDSVAGD…KNAENQQVNN (93 aa)) is disordered. The segment covering 302–326 (CQEDEEEDWQTCSEEDSVPEEEEGC) has biased composition (acidic residues). GTP-binding positions include 379–386 (GYPNVGKS) and 423–426 (DCPG). Residues 618–644 (VPGKPWKKHGNRNKKEKSRRLYKHLDV) form a disordered region. The segment covering 622 to 644 (PWKKHGNRNKKEKSRRLYKHLDV) has biased composition (basic residues).

Belongs to the TRAFAC class YlqF/YawG GTPase family. LSG1 subfamily.

The protein localises to the cytoplasm. Its subcellular location is the endoplasmic reticulum. The protein resides in the nucleus. It localises to the cajal body. The catalysed reaction is GTP + H2O = GDP + phosphate + H(+). Its function is as follows. Functions as a GTPase. May act by mediating the release of NMD3 from the 60S ribosomal subunit after export into the cytoplasm during the 60S ribosomal subunit maturation. The polypeptide is Large subunit GTPase 1 homolog (Mus musculus (Mouse)).